The following is a 255-amino-acid chain: Small ribosomal subunit protein uS2 (255 aa).

Residues 231 to 255 form a disordered region; sequence RLQTGAEEEFSTEGEEVVEETPAEA. Positions 236 to 255 are enriched in acidic residues; that stretch reads AEEEFSTEGEEVVEETPAEA.

Belongs to the universal ribosomal protein uS2 family.

The polypeptide is Small ribosomal subunit protein uS2 (Geobacter sp. (strain M21)).